The following is a 610-amino-acid chain: Elongation factor 4 (610 aa).

Residues 11-193 (QRIRNFSIVA…KIVQDIPAPT (183 aa)) form the tr-type G domain. Residues 23–28 (DHGKST) and 140–143 (NKVD) contribute to the GTP site.

This sequence belongs to the TRAFAC class translation factor GTPase superfamily. Classic translation factor GTPase family. LepA subfamily.

The protein localises to the cell membrane. It carries out the reaction GTP + H2O = GDP + phosphate + H(+). In terms of biological role, required for accurate and efficient protein synthesis under certain stress conditions. May act as a fidelity factor of the translation reaction, by catalyzing a one-codon backward translocation of tRNAs on improperly translocated ribosomes. Back-translocation proceeds from a post-translocation (POST) complex to a pre-translocation (PRE) complex, thus giving elongation factor G a second chance to translocate the tRNAs correctly. Binds to ribosomes in a GTP-dependent manner. This is Elongation factor 4 from Limosilactobacillus fermentum (strain NBRC 3956 / LMG 18251) (Lactobacillus fermentum).